We begin with the raw amino-acid sequence, 120 residues long: UPF0145 protein Mboo_1021 (120 aa).

Belongs to the UPF0145 family.

The sequence is that of UPF0145 protein Mboo_1021 from Methanoregula boonei (strain DSM 21154 / JCM 14090 / 6A8).